Reading from the N-terminus, the 291-residue chain is Protein SpdB (291 aa).

Transmembrane regions (helical) follow at residues 24–44, 71–91, and 99–119; these read VVVI…LVVG, ITGV…AHAL, and WLAV…HGLW.

It localises to the cell membrane. Its function is as follows. Involved in plasmid transfer. The sequence is that of Protein SpdB (spdB) from Streptomyces lividans.